A 215-amino-acid chain; its full sequence is MHRDAWLPRPAFSLTGLSLFFSLVPPGRSMEVTAPTTLSVLNGSDTRLPCTFNSCYTVNHKQFSLNWTYQECNNCTEEMFLQFRMKIINLKLERFGDRVEFSGNPSKYDVSVTLKNVQLEDEGIYNCYITNPPDRHRGHGKIYLQVLLEVPPERDSTVAVIVGASVGGFLAVVILVLMVVKCVRRKKEQKLSTDDLKTEEEGKMDGEGNAEDGTK.

A signal peptide spans 1-29 (MHRDAWLPRPAFSLTGLSLFFSLVPPGRS). The Extracellular segment spans residues 30 to 157 (MEVTAPTTLS…LEVPPERDST (128 aa)). The region spanning 32 to 154 (VTAPTTLSVL…QVLLEVPPER (123 aa)) is the Ig-like C2-type domain. N-linked (GlcNAc...) asparagine glycans are attached at residues N42, N66, and N74. Cystine bridges form between C50-C127 and C72-C75. A helical membrane pass occupies residues 158–179 (VAVIVGASVGGFLAVVILVLMV). The Cytoplasmic portion of the chain corresponds to 180–215 (VKCVRRKKEQKLSTDDLKTEEEGKMDGEGNAEDGTK). The segment at 188–215 (EQKLSTDDLKTEEEGKMDGEGNAEDGTK) is disordered. Positions 189 to 215 (QKLSTDDLKTEEEGKMDGEGNAEDGTK) are enriched in basic and acidic residues. S192 is modified (phosphoserine).

It belongs to the sodium channel auxiliary subunit SCN2B (TC 8.A.17) family. As to quaternary structure, a voltage-gated sodium (Nav) channel consists of an ion-conducting pore-forming alpha subunit functional on its own that is regulated by one or more beta subunits. The beta subunit SCN2B is disulfide-linked to the pore-forming alpha subunit. Interacts with SCN1A; regulatory subunit of SCN1A/Nav1.1. Interacts with SCN2A; regulatory subunit of SCN2A/Nav1.2. Interacts with SCN3A; regulatory subunit of SCN3A/Nav1.3. Interacts with SCN5A; regulatory subunit of SCN5A/Nav1.5. Interacts with SCN8A; regulatory subunit of SCN8A/Nav1.6. Interacts with SCN9A; regulatory subunit of SCN9A/Nav1.7. Interacts with SCN10A; regulatory subunit of SCN10A/Nav1.8. Interacts with TNR; may play a crucial role in clustering and regulation of activity of SCN2B-containing Nav channels at nodes of Ranvier.

The protein resides in the cell membrane. It is found in the cell projection. The protein localises to the axon. Its function is as follows. Regulatory subunit of multiple voltage-gated sodium (Nav) channels directly mediating the depolarization of excitable membranes. Navs, also called VGSCs (voltage-gated sodium channels) or VDSCs (voltage-dependent sodium channels), operate by switching between closed and open conformations depending on the voltage difference across the membrane. In the open conformation they allow Na(+) ions to selectively pass through the pore, along their electrochemical gradient. The influx of Na+ ions provokes membrane depolarization, initiating the propagation of electrical signals throughout cells and tissues. The accessory beta subunits participate in localization and functional modulation of the Nav channels. Modulates the activity of SCN1A/Nav1.1, SCN2A/Nav1.2, SCN2A/Nav1.3, SCN5A/Nav1.5, SCN8A/Nav1.6, SCN9A/Nav1.7 and SCN10A/Nav1.8. The polypeptide is Sodium channel regulatory subunit beta-2 (Mus musculus (Mouse)).